Consider the following 89-residue polypeptide: ATP synthase subunit c, sodium ion specific (89 aa).

2 helical membrane passes run 9–29 (VVLA…IGPG) and 68–88 (GIYS…VGLL).

The protein belongs to the ATPase C chain family. In terms of assembly, F-type ATPases have 2 components, F(1) - the catalytic core - and F(0) - the membrane sodium channel. F(1) has five subunits: alpha(3), beta(3), gamma(1), delta(1), epsilon(1). F(0) has three main subunits: a(1), b(2) and c(10-14). The alpha and beta chains form an alternating ring which encloses part of the gamma chain. F(1) is attached to F(0) by a central stalk formed by the gamma and epsilon chains, while a peripheral stalk is formed by the delta and b chains.

It localises to the cell membrane. Functionally, f(1)F(0) ATP synthase produces ATP from ADP in the presence of a proton or sodium gradient. F-type ATPases consist of two structural domains, F(1) containing the extramembraneous catalytic core and F(0) containing the membrane sodium channel, linked together by a central stalk and a peripheral stalk. During catalysis, ATP synthesis in the catalytic domain of F(1) is coupled via a rotary mechanism of the central stalk subunits to sodium translocation. Its function is as follows. Key component of the F(0) channel; it plays a direct role in translocation across the membrane. A homomeric c-ring of between 10-14 subunits forms the central stalk rotor element with the F(1) delta and epsilon subunits. In Propionigenium modestum, this protein is ATP synthase subunit c, sodium ion specific (atpE).